We begin with the raw amino-acid sequence, 311 residues long: 3'(2'),5'-bisphosphate nucleotidase 1 (311 aa).

D49 functions as the Proton acceptor in the catalytic mechanism. Positions 72, 116, 118, and 119 each coordinate Mg(2+). T121 acts as the Proton acceptor in catalysis. 4 residues coordinate AMP: T202, H205, G227, and K231. Residue D254 participates in Mg(2+) binding.

This sequence belongs to the inositol monophosphatase superfamily. Mg(2+) is required as a cofactor.

The enzyme catalyses adenosine 3',5'-bisphosphate + H2O = AMP + phosphate. It carries out the reaction adenosine 2',5'-bisphosphate + H2O = AMP + phosphate. It catalyses the reaction 3'-phosphoadenylyl sulfate + H2O = adenosine 5'-phosphosulfate + phosphate. The catalysed reaction is 1D-myo-inositol 1,4-bisphosphate + H2O = 1D-myo-inositol 4-phosphate + phosphate. The enzyme catalyses 1D-myo-inositol 1,3,4-trisphosphate + H2O = 1D-myo-inositol 3,4-bisphosphate + phosphate. With respect to regulation, inhibited by Li(+) and Ca(2+), but not by Na(+). In terms of biological role, phosphatase that converts 3'(2')-phosphoadenosine 5'-phosphate (PAP) to AMP and adenosine 3'-phosphate 5'-phosphosulfate (PAPS) to adenosine 5'-phosphosulfate (APS). Is also able to hydrolyze inositol 1,4-bisphosphate (Ins(1,4)P2) and inositol 1,3,4-trisphosphate (Ins(1,3,4)P3), but is not active on AMP, 3'-AMP, fructose-1,6-bisphosphate, Ins(1)P, Ins(2)P and Ins(1,4,5)P3. Probably prevents the toxic accumulation of PAP, a compound which inhibits a variety of proteins, including PAPS-utilizing enzymes such as sulfotransferases, and RNA processing enzymes. Could also play a role in inositol recycling and phosphoinositide metabolism. The polypeptide is 3'(2'),5'-bisphosphate nucleotidase 1 (bpnt1) (Dictyostelium discoideum (Social amoeba)).